A 435-amino-acid chain; its full sequence is Monodictyphenone cluster transcription factor (435 aa).

The segment at residues 23 to 50 (CHACALSKLKCSQDKPTCSRCVKRGTAC) is a DNA-binding region (zn(2)-C6 fungal-type). The tract at residues 117-147 (QYHQRTPSYPESIPSLLSSTGPGTSATSPLT) is disordered. The span at 130–147 (PSLLSSTGPGTSATSPLT) shows a compositional bias: low complexity.

The protein localises to the nucleus. Functionally, transcription factor that regulates the expression of the gene cluster that mediates the biosynthesis of monodictyphenone, a prenyl xanthone derivative. The protein is Monodictyphenone cluster transcription factor of Emericella nidulans (strain FGSC A4 / ATCC 38163 / CBS 112.46 / NRRL 194 / M139) (Aspergillus nidulans).